A 580-amino-acid polypeptide reads, in one-letter code: Kelch-like protein 38 (580 aa).

One can recognise a BTB domain in the interval 34–101; it reads TDVSICSGAC…VYTGEVHISA (68 aa). Residues 136-237 form the BACK domain; it reads CLGLVRLAEI…HPAFFHHFIA (102 aa). Kelch repeat units lie at residues 284–331, 333–382, 383–430, 432–478, 479–520, and 522–572; these read FLLL…TLHR, VYVL…THRN, FIFS…VKDQ, LYLF…VLGE, KIII…VMGN, and LYVT…TLQC.

The polypeptide is Kelch-like protein 38 (Klhl38) (Rattus norvegicus (Rat)).